A 364-amino-acid polypeptide reads, in one-letter code: N-acetyl-gamma-glutamyl-phosphate reductase (364 aa).

The active site involves C157.

Belongs to the NAGSA dehydrogenase family. Type 1 subfamily.

The protein resides in the cytoplasm. The enzyme catalyses N-acetyl-L-glutamate 5-semialdehyde + phosphate + NADP(+) = N-acetyl-L-glutamyl 5-phosphate + NADPH + H(+). It participates in amino-acid biosynthesis; L-arginine biosynthesis; N(2)-acetyl-L-ornithine from L-glutamate: step 3/4. Catalyzes the NADPH-dependent reduction of N-acetyl-5-glutamyl phosphate to yield N-acetyl-L-glutamate 5-semialdehyde. The chain is N-acetyl-gamma-glutamyl-phosphate reductase from Bifidobacterium animalis subsp. lactis (strain AD011).